A 947-amino-acid chain; its full sequence is Valine--tRNA ligase (947 aa).

The 'HIGH' region motif lies at 45–55 (PNVTGSLHMGH). Residues 591–595 (KMSKS) carry the 'KMSKS' region motif. Lys-594 provides a ligand contact to ATP. The stretch at 879–943 (DLAAEQARLE…ASLRTALTRV (65 aa)) forms a coiled coil.

This sequence belongs to the class-I aminoacyl-tRNA synthetase family. ValS type 1 subfamily. As to quaternary structure, monomer.

The protein localises to the cytoplasm. It catalyses the reaction tRNA(Val) + L-valine + ATP = L-valyl-tRNA(Val) + AMP + diphosphate. Its function is as follows. Catalyzes the attachment of valine to tRNA(Val). As ValRS can inadvertently accommodate and process structurally similar amino acids such as threonine, to avoid such errors, it has a 'posttransfer' editing activity that hydrolyzes mischarged Thr-tRNA(Val) in a tRNA-dependent manner. This chain is Valine--tRNA ligase, found in Agrobacterium fabrum (strain C58 / ATCC 33970) (Agrobacterium tumefaciens (strain C58)).